The sequence spans 129 residues: Large ribosomal subunit protein uL22 (129 aa).

It belongs to the universal ribosomal protein uL22 family. As to quaternary structure, part of the 50S ribosomal subunit.

This protein binds specifically to 23S rRNA; its binding is stimulated by other ribosomal proteins, e.g. L4, L17, and L20. It is important during the early stages of 50S assembly. It makes multiple contacts with different domains of the 23S rRNA in the assembled 50S subunit and ribosome. In terms of biological role, the globular domain of the protein is located near the polypeptide exit tunnel on the outside of the subunit, while an extended beta-hairpin is found that lines the wall of the exit tunnel in the center of the 70S ribosome. This chain is Large ribosomal subunit protein uL22, found in Bartonella quintana (strain Toulouse) (Rochalimaea quintana).